A 464-amino-acid polypeptide reads, in one-letter code: UDP-N-acetylmuramate--L-alanine ligase (464 aa).

115–121 (GSHGKTT) lines the ATP pocket.

Belongs to the MurCDEF family.

It is found in the cytoplasm. The enzyme catalyses UDP-N-acetyl-alpha-D-muramate + L-alanine + ATP = UDP-N-acetyl-alpha-D-muramoyl-L-alanine + ADP + phosphate + H(+). It functions in the pathway cell wall biogenesis; peptidoglycan biosynthesis. In terms of biological role, cell wall formation. This chain is UDP-N-acetylmuramate--L-alanine ligase, found in Pelagibacter ubique (strain HTCC1062).